Consider the following 387-residue polypeptide: Carbamoyl phosphate synthase small chain (387 aa).

The CPSase stretch occupies residues 1–196 (MEGVLSQLAV…FSINKQKFLF (196 aa)). The L-glutamine site is built by Ser-51, Gly-245, and Gly-247. The region spanning 197–384 (HVVVYDFGVK…IKLIVSQKTT (188 aa)) is the Glutamine amidotransferase type-1 domain. Cys-273 serves as the catalytic Nucleophile. L-glutamine is bound by residues Leu-274, Gln-277, Asn-315, and Phe-318. Active-site residues include His-357 and Glu-359.

It belongs to the CarA family. In terms of assembly, composed of two chains; the small (or glutamine) chain promotes the hydrolysis of glutamine to ammonia, which is used by the large (or ammonia) chain to synthesize carbamoyl phosphate. Tetramer of heterodimers (alpha,beta)4.

It catalyses the reaction hydrogencarbonate + L-glutamine + 2 ATP + H2O = carbamoyl phosphate + L-glutamate + 2 ADP + phosphate + 2 H(+). The enzyme catalyses L-glutamine + H2O = L-glutamate + NH4(+). It functions in the pathway amino-acid biosynthesis; L-arginine biosynthesis; carbamoyl phosphate from bicarbonate: step 1/1. Its pathway is pyrimidine metabolism; UMP biosynthesis via de novo pathway; (S)-dihydroorotate from bicarbonate: step 1/3. Its function is as follows. Small subunit of the glutamine-dependent carbamoyl phosphate synthetase (CPSase). CPSase catalyzes the formation of carbamoyl phosphate from the ammonia moiety of glutamine, carbonate, and phosphate donated by ATP, constituting the first step of 2 biosynthetic pathways, one leading to arginine and/or urea and the other to pyrimidine nucleotides. The small subunit (glutamine amidotransferase) binds and cleaves glutamine to supply the large subunit with the substrate ammonia. The sequence is that of Carbamoyl phosphate synthase small chain from Buchnera aphidicola subsp. Acyrthosiphon pisum (strain APS) (Acyrthosiphon pisum symbiotic bacterium).